A 515-amino-acid polypeptide reads, in one-letter code: Peroxisomal catalase A (515 aa).

At S2 the chain carries N-acetylserine. Residues H70 and N143 contribute to the active site. Y355 contributes to the heme binding site. The Microbody targeting signal signature appears at 513 to 515 (SKF).

Belongs to the catalase family. In terms of assembly, homotetramer. Heme is required as a cofactor.

It is found in the peroxisome matrix. The enzyme catalyses 2 H2O2 = O2 + 2 H2O. Functionally, catalyzes the degradation of hydrogen peroxide (H(2)O(2)) generated by peroxisomal oxidases to water and oxygen, thereby protecting cells from the toxic effects of hydrogen peroxide. In Saccharomyces cerevisiae (strain ATCC 204508 / S288c) (Baker's yeast), this protein is Peroxisomal catalase A (CTA1).